The following is a 995-amino-acid chain: Integrator complex subunit 8 (995 aa).

T18 bears the Phosphothreonine mark. A WFEF motif motif is present at residues W24–L29. 4 TPR repeats span residues C250–I288, S320–V356, V570–F603, and H833–F866.

This sequence belongs to the Integrator subunit 8 family. Component of the Integrator complex, composed of core subunits INTS1, INTS2, INTS3, INTS4, INTS5, INTS6, INTS7, INTS8, INTS9/RC74, INTS10, INTS11/CPSF3L, INTS12, INTS13, INTS14 and INTS15. The core complex associates with protein phosphatase 2A subunits PPP2CA and PPP2R1A, to form the Integrator-PP2A (INTAC) complex.

It localises to the nucleus. The protein resides in the chromosome. In terms of biological role, component of the integrator complex, a multiprotein complex that terminates RNA polymerase II (Pol II) transcription in the promoter-proximal region of genes. The integrator complex provides a quality checkpoint during transcription elongation by driving premature transcription termination of transcripts that are unfavorably configured for transcriptional elongation: the complex terminates transcription by (1) catalyzing dephosphorylation of the C-terminal domain (CTD) of Pol II subunit POLR2A/RPB1 and SUPT5H/SPT5, (2) degrading the exiting nascent RNA transcript via endonuclease activity and (3) promoting the release of Pol II from bound DNA. The integrator complex is also involved in terminating the synthesis of non-coding Pol II transcripts, such as enhancer RNAs (eRNAs), small nuclear RNAs (snRNAs), telomerase RNAs and long non-coding RNAs (lncRNAs). Within the integrator complex, INTS8 is required for the recruitment of protein phosphatase 2A (PP2A) to transcription pause-release checkpoint. In Homo sapiens (Human), this protein is Integrator complex subunit 8.